We begin with the raw amino-acid sequence, 531 residues long: UDP-glucuronosyltransferase 1A6 (531 aa).

The signal sequence occupies residues 1–26 (MACLLPAAQTLPAGFLFLVLWASVLG). Residues asparagine 293 and asparagine 431 are each glycosylated (N-linked (GlcNAc...) asparagine). A helical membrane pass occupies residues 489–505 (VIGFLLAIVLTVVFIVF).

It belongs to the UDP-glycosyltransferase family. As to expression, expressed in liver, kidney and at very low levels in colon.

It is found in the microsome. The protein localises to the endoplasmic reticulum membrane. It carries out the reaction glucuronate acceptor + UDP-alpha-D-glucuronate = acceptor beta-D-glucuronoside + UDP + H(+). The enzyme catalyses (5Z,8Z,11Z,14Z)-eicosatetraenoate + UDP-alpha-D-glucuronate = O-[(5Z),(8Z),(11Z),(14Z)-eicosatetraenoyl]-beta-D-glucuronate + UDP. It catalyses the reaction 15-hydroxy-(5Z,8Z,11Z,13E)-eicosatetraenoate + UDP-alpha-D-glucuronate = 15-O-(beta-D-glucuronosyl)-(5Z,8Z,11Z,14Z)-eicosatetraenoate + UDP + H(+). The catalysed reaction is (E)-ferulate + UDP-alpha-D-glucuronate = (E)-4-O-(beta-D-glucuronosyl)-ferulate + UDP + H(+). It carries out the reaction (E)-ferulate + UDP-alpha-D-glucuronate = (E)-ferulic acid beta-D-glucuronate ester + UDP. Its function is as follows. UDP-glucuronosyltransferase (UGT) that catalyzes phase II biotransformation reactions in which lipophilic substrates are conjugated with glucuronic acid to facilitate their inactivation and excretion from the body. Essential for the elimination and detoxification of drugs, xenobiotics and endogenous compounds. Involved in the glucuronidation of arachidonic acid (AA) and AA-derived eicosanoids including 15-HETE and 20-HETE. Conjugates small planar phenolic molecules such as 4-nitrophenol, 1-naphthol, and 4-methylumbelliferone. The bulky phenol 4-hydroxybiphenyl, androgens and estrogens are not substrates. 2-hydroxybiphenyl is an excellent substrate. Involved in the glucuronidation of the phytochemical ferulic acid at the phenolic or the carboxylic acid group. The chain is UDP-glucuronosyltransferase 1A6 from Mus musculus (Mouse).